The sequence spans 563 residues: Serine carboxypeptidase S10 family member 2 (563 aa).

A signal peptide spans 1–23 (MNIKIILLSIILIIQLLLLNNNG). Residues 24–529 (GIVESKINFS…VPLTLGAWIG (506 aa)) are Extracellular-facing. 4 N-linked (GlcNAc...) asparagine glycosylation sites follow: N31, N95, N110, and N213. Residue S225 is part of the active site. 3 N-linked (GlcNAc...) asparagine glycosylation sites follow: N244, N328, and N382. D417 is an active-site residue. N468 carries an N-linked (GlcNAc...) asparagine glycan. H479 is a catalytic residue. A glycan (N-linked (GlcNAc...) asparagine) is linked at N499. Residues 530–550 (ITVGGCAFGFLVGGLIIYIIM) traverse the membrane as a helical segment. Residues 551–563 (KKSSKNGYYKVIQ) lie on the Cytoplasmic side of the membrane.

The protein belongs to the peptidase S10 family.

It is found in the membrane. Probable carboxypeptidase. This is Serine carboxypeptidase S10 family member 2 from Dictyostelium discoideum (Social amoeba).